A 1121-amino-acid polypeptide reads, in one-letter code: Putative ATP-dependent RNA helicase ECM32 (1121 aa).

Residues 157–187 are disordered; that stretch reads NSTRKPRKKGGRRVGRGKKGRKGAKIKKEKK. Residues 160-184 show a composition bias toward basic residues; it reads RKPRKKGGRRVGRGKKGRKGAKIKK. Ser227 bears the Phosphoserine mark. A disordered region spans residues 233-452; sequence AKVSKSETSR…NQEKNNGKTK (220 aa). Basic residues predominate over residues 251 to 263; it reads NKGKGNKANHKKN. Polar residues predominate over residues 278–287; sequence IRNNVRNSQP. The span at 307-316 shows a compositional bias: basic and acidic residues; that stretch reads GKNESVDKHQ. A compositionally biased stretch (low complexity) spans 323–336; it reads LNGNGSGSTNTTGL. Basic and acidic residues predominate over residues 342 to 363; the sequence is DHAGQKTKGNDKTGNKNPREAK. Residues 376 to 413 show a composition bias toward polar residues; it reads KSNNQPNKGTSRWTIGSDTESSREPSISPNENTTSITK. Position 392 is a phosphoserine (Ser392). Over residues 426-452 the composition is skewed to basic and acidic residues; that stretch reads LNEKSKTTTMPKKLETKNQEKNNGKTK. Thr465 carries the post-translational modification Phosphothreonine. 670–677 is a binding site for ATP; the sequence is GPPGTGKT.

This sequence belongs to the DNA2/NAM7 helicase family. In terms of assembly, interacts with the peptidyl release factors SUP35 and weakly with SUP45.

The protein resides in the cytoplasm. It catalyses the reaction ATP + H2O = ADP + phosphate + H(+). Its function is as follows. Probable RNA helicase, which may be involved in modulation of the translation termination process. Probably unwinds double-stranded RNA. In vitro, unwinds covalently closed, circular DNA in the presence of a DNA topoisomerase TOP1 and replication factor-A protein RFA1. The chain is Putative ATP-dependent RNA helicase ECM32 (ECM32) from Saccharomyces cerevisiae (strain ATCC 204508 / S288c) (Baker's yeast).